Consider the following 469-residue polypeptide: 3-isopropylmalate dehydratase large subunit (469 aa).

[4Fe-4S] cluster-binding residues include C347, C408, and C411.

Belongs to the aconitase/IPM isomerase family. LeuC type 1 subfamily. As to quaternary structure, heterodimer of LeuC and LeuD. [4Fe-4S] cluster serves as cofactor.

The catalysed reaction is (2R,3S)-3-isopropylmalate = (2S)-2-isopropylmalate. The protein operates within amino-acid biosynthesis; L-leucine biosynthesis; L-leucine from 3-methyl-2-oxobutanoate: step 2/4. Functionally, catalyzes the isomerization between 2-isopropylmalate and 3-isopropylmalate, via the formation of 2-isopropylmaleate. The polypeptide is 3-isopropylmalate dehydratase large subunit (Actinobacillus pleuropneumoniae serotype 5b (strain L20)).